The sequence spans 505 residues: ATP synthase subunit beta, mitochondrial (505 aa).

The N-terminal 31 residues, 1–31 (MFALRAASKADKNLLPFLGQLSRSHAAKAAK), are a transit peptide targeting the mitochondrion. Position 183 to 190 (183 to 190 (GGAGVGKT)) interacts with ATP.

Belongs to the ATPase alpha/beta chains family. As to quaternary structure, F-type ATPases have 2 components, CF(1) - the catalytic core - and CF(0) - the membrane proton channel. CF(1) has five subunits: alpha(3), beta(3), gamma(1), delta(1), epsilon(1). CF(0) has three main subunits: a, b and c.

The protein resides in the mitochondrion. Its subcellular location is the mitochondrion inner membrane. The enzyme catalyses ATP + H2O + 4 H(+)(in) = ADP + phosphate + 5 H(+)(out). Mitochondrial membrane ATP synthase (F(1)F(0) ATP synthase or Complex V) produces ATP from ADP in the presence of a proton gradient across the membrane which is generated by electron transport complexes of the respiratory chain. F-type ATPases consist of two structural domains, F(1) - containing the extramembraneous catalytic core, and F(0) - containing the membrane proton channel, linked together by a central stalk and a peripheral stalk. During catalysis, ATP synthesis in the catalytic domain of F(1) is coupled via a rotary mechanism of the central stalk subunits to proton translocation. Subunits alpha and beta form the catalytic core in F(1). Rotation of the central stalk against the surrounding alpha(3)beta(3) subunits leads to hydrolysis of ATP in three separate catalytic sites on the beta subunits. This Drosophila melanogaster (Fruit fly) protein is ATP synthase subunit beta, mitochondrial.